A 231-amino-acid polypeptide reads, in one-letter code: MQQVPYGSVDRDKPLIRVPFTRLAVITVCLPLLGLVACIVLAMLYHYNDATYTHCQVPNYLPSISAAISLTPERYIWRFSIGLHSAPRFLVAAAYLSFYRGRFSRRLTEQLLSGFTFLLALSENVGLLLLTYVSSTETYSVHKSGFILFIGSSLFHMLCTCKLWSLIVKYSISSEEMMSYWFKLRLFLFNGGCCVLAVYFYRRHNTYCEEGITHASRCVSIWWCCPTWPST.

The Cytoplasmic segment spans residues 1–22; the sequence is MQQVPYGSVDRDKPLIRVPFTR. A helical membrane pass occupies residues 23-43; it reads LAVITVCLPLLGLVACIVLAM. Residues 44–78 are Lumenal-facing; that stretch reads LYHYNDATYTHCQVPNYLPSISAAISLTPERYIWR. Residues 79 to 99 traverse the membrane as a helical segment; sequence FSIGLHSAPRFLVAAAYLSFY. Residues 100-110 lie on the Cytoplasmic side of the membrane; sequence RGRFSRRLTEQ. Residues 111-131 traverse the membrane as a helical segment; that stretch reads LLSGFTFLLALSENVGLLLLT. Residues 132–146 lie on the Lumenal side of the membrane; it reads YVSSTETYSVHKSGF. Residues 147-167 form a helical membrane-spanning segment; the sequence is ILFIGSSLFHMLCTCKLWSLI. Over 168–179 the chain is Cytoplasmic; it reads VKYSISSEEMMS. Residues 180 to 200 traverse the membrane as a helical segment; it reads YWFKLRLFLFNGGCCVLAVYF. At 201–231 the chain is on the lumenal side; sequence YRRHNTYCEEGITHASRCVSIWWCCPTWPST.

This sequence belongs to the PGAP2 family.

The protein resides in the golgi apparatus membrane. In terms of biological role, involved in the fatty acid remodeling steps of GPI-anchor maturation where the unsaturated acyl chain at sn-2 of inositol phosphate is replaced by a saturated stearoyl chain. May catalyze the second step of the fatty acid remodeling, by reacylating a lyso-GPI intermediate at sn-2 of inositol phosphate by a saturated chain. The fatty acid remodeling steps is critical for the integration of GPI-APs into lipid rafts. The chain is Acyltransferase PGAP2 from Danio rerio (Zebrafish).